The chain runs to 229 residues: Putative germin-like protein subfamily 1 member 2 (229 aa).

A signal peptide spans 1–24; sequence MKGLVQFLVAKIILLVLASTFVHC. A disulfide bond links C34 and C50. N-linked (GlcNAc...) asparagine glycosylation is found at N38 and N71. A Cupin type-1 domain is found at 64-215; the sequence is SGLNIPGNTS…AFALDVNIVR (152 aa). Residues H112 and H114 each coordinate Mn(2+). Residue N139 is glycosylated (N-linked (GlcNAc...) asparagine). H163 lines the Mn(2+) pocket.

The protein belongs to the germin family. As to quaternary structure, oligomer (believed to be a pentamer but probably hexamer).

Its subcellular location is the secreted. It localises to the extracellular space. The protein resides in the apoplast. In terms of biological role, may play a role in plant defense. Probably has no oxalate oxidase activity even if the active site is conserved. In Arabidopsis thaliana (Mouse-ear cress), this protein is Putative germin-like protein subfamily 1 member 2.